The chain runs to 88 residues: Small ribosomal subunit protein bS20 (88 aa).

The tract at residues 1–21 (MANTTSAKKATRKIARRTAVN) is disordered.

This sequence belongs to the bacterial ribosomal protein bS20 family.

Binds directly to 16S ribosomal RNA. In Sinorhizobium fredii (strain NBRC 101917 / NGR234), this protein is Small ribosomal subunit protein bS20.